The sequence spans 588 residues: MNNSINHKFHHISRAEYQELLAVSRGDAVADYIIDNVSILDLINGGEISGPIVIKGRYIAGVGAEYADAPALQRIDARGATAVPGFIDAHLHIESSMMTPVTFETATLPRGLTTVICDPHEIVNVMGEAGFAWFARCAEQARQNQYLQVSSCVPALEGCDVNGASFTLEQMLAWRDHPQVTGLAEMMDYPGVISGQNALLDKLDAFRHLTLDGHCPGLGGKELNAYITAGIENCHESYQLEEGRRKLQLGMSLMIREGSAARNLNALAPLINEFNSPQCMLCTDDRNPWEIAHEGHIDALIRRLIEQHNVPLHVAYRVASWSTARHFGLNHLGLLAPGKQADIVLLSDARKVTVQQVLVKGEPIDAQTLQAEESARLAQSAPPYGNTIARQPVSASDFALQFTPGKRYRVIDVIHNELITHSHSSVYSENGFDRDDVSFIAVLERYGQRLAPACGLLGGFGLNEGALAATVSHDSHNIVVIGRSAEEMALAVNQVIQDGGGLCVVRNGQVQSHLPLPIAGLMSTDTAQLLAEQIDALKAAARECGPLPDEPFIQMAFLSLPVIPALKLTSQGLFDGEKFAFTTLEVTE.

It belongs to the metallo-dependent hydrolases superfamily. Adenine deaminase family. Homodimer. Requires Mn(2+) as cofactor.

The enzyme catalyses adenine + H2O + H(+) = hypoxanthine + NH4(+). This chain is Adenine deaminase, found in Escherichia coli (strain SE11).